Consider the following 499-residue polypeptide: Potassium voltage-gated channel subfamily A member 2 (499 aa).

The interval 1-27 is disordered; the sequence is MTVATGEPADEAAALPGHPQDTYDPEA. Residues 1–125 are tetramerization domain; it reads MTVATGEPAD…YELGEEAMEM (125 aa). The Cytoplasmic segment spans residues 1–160; sequence MTVATGEPAD…LLFEYPESSG (160 aa). A helical transmembrane segment spans residues 161 to 182; sequence PARIIAIVSVMVILISIVSFCL. Residues 183–221 lie on the Extracellular side of the membrane; that stretch reads ETLPIFRDENEDMHGGGVTFHTYSNSTIGYQQSTSFTDP. Residue Asn207 is glycosylated (N-linked (GlcNAc...) asparagine). A helical transmembrane segment spans residues 222 to 243; it reads FFIVETLCIIWFSFEFLVRFFA. A lipid anchor (S-palmitoyl cysteine) is attached at Cys244. The Cytoplasmic portion of the chain corresponds to 244–254; that stretch reads CPSKAGFFTNI. A helical membrane pass occupies residues 255–275; sequence MNIIDIVAIIPYFITLGTELA. The Extracellular portion of the chain corresponds to 276–289; it reads EKPEDAQQGQQAMS. Residues 290 to 310 form a helical; Voltage-sensor membrane-spanning segment; the sequence is LAILRVIRLVRVFRIFKLSRH. Topologically, residues 311–325 are cytoplasmic; it reads SKGLQILGQTLKASM. The segment at 312–325 is S4-S5 linker; that stretch reads KGLQILGQTLKASM. The chain crosses the membrane as a helical span at residues 326–347; that stretch reads RELGLLIFFLFIGVILFSSAVY. At 348–361 the chain is on the extracellular side; the sequence is FAEADERESQFPSI. The helical intramembrane region spans 362 to 373; sequence PDAFWWAVVSMT. The short motif at 374–379 is the Selectivity filter element; sequence TVGYGD. An intramembrane segment occupies 374 to 381; that stretch reads TVGYGDMV. The Extracellular portion of the chain corresponds to 382–388; the sequence is PTTIGGK. Residues 389–417 traverse the membrane as a helical segment; the sequence is IVGSLCAIAGVLTIALPVPVIVSNFNYFY. Residues 418-499 are Cytoplasmic-facing; sequence HRETEGEEQA…VNITKMLTDV (82 aa). Tyr429 is modified (phosphotyrosine). Residues Ser434, Ser440, Ser441, and Ser449 each carry the phosphoserine modification. Position 458 is a phosphotyrosine (Tyr458). Ser468 carries the phosphoserine modification. The PDZ-binding motif lies at 497 to 499; sequence TDV.

Belongs to the potassium channel family. A (Shaker) (TC 1.A.1.2) subfamily. Kv1.2/KCNA2 sub-subfamily. Homotetramer and heterotetramer with other channel-forming alpha subunits, such as KCNA1, KCNA4, KCNA5, KCNA6 and KCNA7. Channel activity is regulated by interaction with the beta subunits, including KCNAB1 and KCNAB2. Identified in a complex with KCNA1 and KCNAB2. Identified in a complex with KCNA5 and KCNAB1. Interacts with the beta subunit KCNAB1. Identified in a complex with KCNA4 and FYN. Interacts with PTK2B. Interacts (via C-terminus) with CTTN. Interacts (via N-terminal cytoplasmic domain) with RHOA (GTP-bound form); this regulates channel activity by reducing location at the cell surface in response to CHRM1 activation. Interacts with DRD2. Interacts with SIGMAR1; cocaine consumption leads to increased interaction. Interacts with ADAM22. Interacts with CNTNAP2. Interacts (via C-terminus) with the PDZ domains of DLG1, DLG2 and DLG4. Interacts with ADAM11. Interacts with LYNX1. Phosphorylated on tyrosine residues; phosphorylation increases in response to ischemia. Phosphorylated on tyrosine residues by activated PTK2B/PYK2. Phosphorylation on tyrosine residues suppresses ion channel activity. Phosphorylated on tyrosine residues in response to CHRM1 activation; this abolishes interaction with CTTN. This is probably due to endocytosis of the phosphorylated channel subunits. Phosphorylated on serine residues in response to increased cAMP levels; phosphorylation is apparently not catalyzed by PKA. Post-translationally, N-glycosylated, with complex, sialylated N-glycans. As to expression, expressed in a wide variety of gastrointestinal smooth muscles. Not expressed in portal vein, renal artery, and uterus.

It localises to the cell membrane. The protein resides in the membrane. It is found in the cell projection. The protein localises to the axon. Its subcellular location is the synapse. It localises to the presynaptic cell membrane. The protein resides in the synaptosome. It is found in the endoplasmic reticulum membrane. The protein localises to the dendrite. Its subcellular location is the lamellipodium membrane. It localises to the cell junction. The protein resides in the paranodal septate junction. It carries out the reaction K(+)(in) = K(+)(out). Its activity is regulated as follows. Inhibited by 4-aminopyridine (4-AP). Inhibited by dendrotoxin (DTX) and charybdotoxin (CTX), but not by tetraethylammonium (TEA). Inhibited by tityustoxin-K alpha (TsTX-Kalpha), a toxin that is highly specific for KCNA2. Inhibited by maurotoxin. Inhibited by kappaM conotoxins kappaM-RIIIJ and kappaM-RIIIK. Voltage-gated potassium channel that mediates transmembrane potassium transport in excitable membranes, primarily in the brain and the central nervous system, but also in the cardiovascular system. Prevents aberrant action potential firing and regulates neuronal output. Forms tetrameric potassium-selective channels through which potassium ions pass in accordance with their electrochemical gradient. The channel alternates between opened and closed conformations in response to the voltage difference across the membrane. Can form functional homotetrameric channels and heterotetrameric channels that contain variable proportions of KCNA1, KCNA2, KCNA4, KCNA5, KCNA6, KCNA7, and possibly other family members as well; channel properties depend on the type of alpha subunits that are part of the channel. Channel properties are modulated by cytoplasmic beta subunits that regulate the subcellular location of the alpha subunits and promote rapid inactivation of delayed rectifier potassium channels. In vivo, membranes probably contain a mixture of heteromeric potassium channel complexes, making it difficult to assign currents observed in intact tissues to any particular potassium channel family member. Homotetrameric KCNA2 forms a delayed-rectifier potassium channel that opens in response to membrane depolarization, followed by slow spontaneous channel closure. In contrast, a heteromultimer formed by KCNA2 and KCNA4 shows rapid inactivation. Regulates neuronal excitability and plays a role as pacemaker in the regulation of neuronal action potentials. KCNA2-containing channels play a presynaptic role and prevent hyperexcitability and aberrant action potential firing. Response to toxins that are selective for KCNA2-containing potassium channels suggests that in Purkinje cells, dendritic subthreshold KCNA2-containing potassium channels prevent random spontaneous calcium spikes, suppressing dendritic hyperexcitability without hindering the generation of somatic action potentials, and thereby play an important role in motor coordination. Plays a role in the induction of long-term potentiation of neuron excitability in the CA3 layer of the hippocampus. May function as down-stream effector for G protein-coupled receptors and inhibit GABAergic inputs to basolateral amygdala neurons. May contribute to the regulation of neurotransmitter release, such as gamma-aminobutyric acid (GABA). Contributes to the regulation of the axonal release of the neurotransmitter dopamine. Reduced KCNA2 expression plays a role in the perception of neuropathic pain after peripheral nerve injury, but not acute pain. Plays a role in the regulation of the time spent in non-rapid eye movement (NREM) sleep. The polypeptide is Potassium voltage-gated channel subfamily A member 2 (KCNA2) (Canis lupus familiaris (Dog)).